Reading from the N-terminus, the 288-residue chain is 4-hydroxy-tetrahydrodipicolinate synthase (288 aa).

Threonine 42 is a binding site for pyruvate. The active-site Proton donor/acceptor is tyrosine 129. The active-site Schiff-base intermediate with substrate is the lysine 158. Isoleucine 200 contacts pyruvate.

This sequence belongs to the DapA family. As to quaternary structure, homotetramer; dimer of dimers.

It is found in the cytoplasm. The enzyme catalyses L-aspartate 4-semialdehyde + pyruvate = (2S,4S)-4-hydroxy-2,3,4,5-tetrahydrodipicolinate + H2O + H(+). It functions in the pathway amino-acid biosynthesis; L-lysine biosynthesis via DAP pathway; (S)-tetrahydrodipicolinate from L-aspartate: step 3/4. Its function is as follows. Catalyzes the condensation of (S)-aspartate-beta-semialdehyde [(S)-ASA] and pyruvate to 4-hydroxy-tetrahydrodipicolinate (HTPA). This is 4-hydroxy-tetrahydrodipicolinate synthase from Thermosipho melanesiensis (strain DSM 12029 / CIP 104789 / BI429).